Here is a 367-residue protein sequence, read N- to C-terminus: Tetraacyldisaccharide 4'-kinase (367 aa).

Residue Val-68–Thr-75 participates in ATP binding.

This sequence belongs to the LpxK family.

It carries out the reaction a lipid A disaccharide + ATP = a lipid IVA + ADP + H(+). The protein operates within glycolipid biosynthesis; lipid IV(A) biosynthesis; lipid IV(A) from (3R)-3-hydroxytetradecanoyl-[acyl-carrier-protein] and UDP-N-acetyl-alpha-D-glucosamine: step 6/6. Transfers the gamma-phosphate of ATP to the 4'-position of a tetraacyldisaccharide 1-phosphate intermediate (termed DS-1-P) to form tetraacyldisaccharide 1,4'-bis-phosphate (lipid IVA). This Chlamydia caviae (strain ATCC VR-813 / DSM 19441 / 03DC25 / GPIC) (Chlamydophila caviae) protein is Tetraacyldisaccharide 4'-kinase.